Reading from the N-terminus, the 175-residue chain is SsrA-binding protein (175 aa).

The protein belongs to the SmpB family.

It is found in the cytoplasm. Its function is as follows. Required for rescue of stalled ribosomes mediated by trans-translation. Binds to transfer-messenger RNA (tmRNA), required for stable association of tmRNA with ribosomes. tmRNA and SmpB together mimic tRNA shape, replacing the anticodon stem-loop with SmpB. tmRNA is encoded by the ssrA gene; the 2 termini fold to resemble tRNA(Ala) and it encodes a 'tag peptide', a short internal open reading frame. During trans-translation Ala-aminoacylated tmRNA acts like a tRNA, entering the A-site of stalled ribosomes, displacing the stalled mRNA. The ribosome then switches to translate the ORF on the tmRNA; the nascent peptide is terminated with the 'tag peptide' encoded by the tmRNA and targeted for degradation. The ribosome is freed to recommence translation, which seems to be the essential function of trans-translation. The sequence is that of SsrA-binding protein from Prochlorococcus marinus subsp. pastoris (strain CCMP1986 / NIES-2087 / MED4).